The primary structure comprises 462 residues: Argininosuccinate lyase (462 aa).

The protein belongs to the lyase 1 family. Argininosuccinate lyase subfamily.

The protein localises to the cytoplasm. The catalysed reaction is 2-(N(omega)-L-arginino)succinate = fumarate + L-arginine. The protein operates within amino-acid biosynthesis; L-arginine biosynthesis; L-arginine from L-ornithine and carbamoyl phosphate: step 3/3. This chain is Argininosuccinate lyase, found in Bacillus cereus (strain ATCC 10987 / NRS 248).